The sequence spans 24 residues: Unknown protein 3 (24 aa).

The polypeptide is Unknown protein 3 (Pseudotsuga menziesii (Douglas-fir)).